A 296-amino-acid chain; its full sequence is Nucleotide-binding protein SPJ_1472 (296 aa).

13–20 is an ATP binding site; it reads GMSGAGKT. A GTP-binding site is contributed by 63 to 66; sequence DMRS.

It belongs to the RapZ-like family.

In terms of biological role, displays ATPase and GTPase activities. The sequence is that of Nucleotide-binding protein SPJ_1472 from Streptococcus pneumoniae (strain JJA).